The following is a 145-amino-acid chain: Ribonuclease HI (145 aa).

Positions 1–142 (MNQTVYLYTD…ADDLANRGAA (142 aa)) constitute an RNase H type-1 domain. Aspartate 10, glutamate 48, aspartate 70, and aspartate 134 together coordinate Mg(2+).

The protein belongs to the RNase H family. Monomer. The cofactor is Mg(2+).

The protein resides in the cytoplasm. It catalyses the reaction Endonucleolytic cleavage to 5'-phosphomonoester.. Functionally, endonuclease that specifically degrades the RNA of RNA-DNA hybrids. The sequence is that of Ribonuclease HI from Neisseria meningitidis serogroup B (strain ATCC BAA-335 / MC58).